The chain runs to 225 residues: Nuclear protein UL4 homolog (225 aa).

This sequence belongs to the alphaherpesvirinae HHV-1 UL4 family.

It is found in the host nucleus. This Equus caballus (Horse) protein is Nuclear protein UL4 homolog.